The primary structure comprises 468 residues: Argininosuccinate lyase (468 aa).

The protein belongs to the lyase 1 family. Argininosuccinate lyase subfamily.

It localises to the cytoplasm. It carries out the reaction 2-(N(omega)-L-arginino)succinate = fumarate + L-arginine. The protein operates within amino-acid biosynthesis; L-arginine biosynthesis; L-arginine from L-ornithine and carbamoyl phosphate: step 3/3. This Paraburkholderia xenovorans (strain LB400) protein is Argininosuccinate lyase.